The chain runs to 147 residues: UPF0306 protein YPK_3704 (147 aa).

Belongs to the UPF0306 family.

The chain is UPF0306 protein YPK_3704 from Yersinia pseudotuberculosis serotype O:3 (strain YPIII).